The sequence spans 147 residues: Large ribosomal subunit protein bL9 (147 aa).

It belongs to the bacterial ribosomal protein bL9 family.

In terms of biological role, binds to the 23S rRNA. In Trichlorobacter lovleyi (strain ATCC BAA-1151 / DSM 17278 / SZ) (Geobacter lovleyi), this protein is Large ribosomal subunit protein bL9.